Here is a 439-residue protein sequence, read N- to C-terminus: Divalent metal cation transporter MntH 1 (439 aa).

9 helical membrane-spanning segments follow: residues 64-84, 139-161, 171-191, 214-234, 262-282, 300-320, 359-379, 380-400, and 418-438; these read FGYA…LLQS, LLGV…VLAL, AIVL…LVLI, PLYL…LYLH, IGSL…AAAA, LLDP…ALLA, LVPA…KLLV, LSQV…IRFS, and LAWS…YFWF.

This sequence belongs to the NRAMP family.

It localises to the cell inner membrane. Its function is as follows. H(+)-stimulated, divalent metal cation uptake system. The polypeptide is Divalent metal cation transporter MntH 1 (Pseudomonas aeruginosa (strain ATCC 15692 / DSM 22644 / CIP 104116 / JCM 14847 / LMG 12228 / 1C / PRS 101 / PAO1)).